The chain runs to 517 residues: ATP synthase subunit alpha (517 aa).

173–180 (GDRQTGKT) is a binding site for ATP.

The protein belongs to the ATPase alpha/beta chains family. F-type ATPases have 2 components, CF(1) - the catalytic core - and CF(0) - the membrane proton channel. CF(1) has five subunits: alpha(3), beta(3), gamma(1), delta(1), epsilon(1). CF(0) has three main subunits: a(1), b(2) and c(9-12). The alpha and beta chains form an alternating ring which encloses part of the gamma chain. CF(1) is attached to CF(0) by a central stalk formed by the gamma and epsilon chains, while a peripheral stalk is formed by the delta and b chains.

The protein localises to the cell inner membrane. It carries out the reaction ATP + H2O + 4 H(+)(in) = ADP + phosphate + 5 H(+)(out). Produces ATP from ADP in the presence of a proton gradient across the membrane. The alpha chain is a regulatory subunit. The protein is ATP synthase subunit alpha of Legionella pneumophila (strain Lens).